The following is a 329-amino-acid chain: Probable acyltransferase FabY (329 aa).

Residues 18-162 (YHLRVPQTEE…RHFLMIKPVA (145 aa)) form the N-acetyltransferase domain.

This sequence belongs to the acetyltransferase family. FabY subfamily.

It functions in the pathway lipid metabolism; fatty acid biosynthesis. Its function is as follows. Supports initiation of fatty acid biosynthesis in the absence of FabH. The chain is Probable acyltransferase FabY from Escherichia coli O157:H7.